A 149-amino-acid polypeptide reads, in one-letter code: 3-dehydroquinate dehydratase (149 aa).

Tyr-22 functions as the Proton acceptor in the catalytic mechanism. Positions 73, 79, and 86 each coordinate substrate. The active-site Proton donor is the His-99. Substrate is bound by residues 100 to 101 (LS) and Arg-110.

Belongs to the type-II 3-dehydroquinase family. As to quaternary structure, homododecamer.

The enzyme catalyses 3-dehydroquinate = 3-dehydroshikimate + H2O. The protein operates within metabolic intermediate biosynthesis; chorismate biosynthesis; chorismate from D-erythrose 4-phosphate and phosphoenolpyruvate: step 3/7. Its function is as follows. Catalyzes a trans-dehydration via an enolate intermediate. The chain is 3-dehydroquinate dehydratase from Prochlorococcus marinus (strain MIT 9313).